Here is a 541-residue protein sequence, read N- to C-terminus: Chaperonin GroEL (541 aa).

ATP is bound by residues 29 to 32 (TLGP), 86 to 90 (DGTTT), Gly413, 476 to 478 (NAA), and Asp492. Residues 521 to 541 (KPEENAPAAPAAPNPGMGGMM) are disordered. Over residues 525–535 (NAPAAPAAPNP) the composition is skewed to low complexity.

The protein belongs to the chaperonin (HSP60) family. As to quaternary structure, forms a cylinder of 14 subunits composed of two heptameric rings stacked back-to-back. Interacts with the co-chaperonin GroES.

The protein resides in the cytoplasm. The enzyme catalyses ATP + H2O + a folded polypeptide = ADP + phosphate + an unfolded polypeptide.. In terms of biological role, together with its co-chaperonin GroES, plays an essential role in assisting protein folding. The GroEL-GroES system forms a nano-cage that allows encapsulation of the non-native substrate proteins and provides a physical environment optimized to promote and accelerate protein folding. This Lactiplantibacillus plantarum (strain ATCC BAA-793 / NCIMB 8826 / WCFS1) (Lactobacillus plantarum) protein is Chaperonin GroEL.